A 286-amino-acid chain; its full sequence is 4-hydroxybenzoate octaprenyltransferase (286 aa).

Helical transmembrane passes span 21–40 (GTLL…AGGM), 95–115 (ILFV…NGLV), 142–162 (FLGI…TGEV), 167–187 (WWLF…YAMV), 210–230 (QIIG…GWSA), 235–255 (LYGL…MLIF), and 266–286 (FLNN…DYLI).

It belongs to the UbiA prenyltransferase family. Mg(2+) serves as cofactor.

Its subcellular location is the cell inner membrane. It carries out the reaction all-trans-octaprenyl diphosphate + 4-hydroxybenzoate = 4-hydroxy-3-(all-trans-octaprenyl)benzoate + diphosphate. The protein operates within cofactor biosynthesis; ubiquinone biosynthesis. Its function is as follows. Catalyzes the prenylation of para-hydroxybenzoate (PHB) with an all-trans polyprenyl group. Mediates the second step in the final reaction sequence of ubiquinone-8 (UQ-8) biosynthesis, which is the condensation of the polyisoprenoid side chain with PHB, generating the first membrane-bound Q intermediate 3-octaprenyl-4-hydroxybenzoate. The chain is 4-hydroxybenzoate octaprenyltransferase from Shewanella baltica (strain OS223).